A 298-amino-acid polypeptide reads, in one-letter code: Probable endonuclease 4 (298 aa).

Zn(2+)-binding residues include His69, His111, Glu146, Asp180, His183, His215, Asp228, His230, and Glu260.

The protein belongs to the AP endonuclease 2 family. Zn(2+) serves as cofactor.

It catalyses the reaction Endonucleolytic cleavage to 5'-phosphooligonucleotide end-products.. Functionally, endonuclease IV plays a role in DNA repair. It cleaves phosphodiester bonds at apurinic or apyrimidinic (AP) sites, generating a 3'-hydroxyl group and a 5'-terminal sugar phosphate. The polypeptide is Probable endonuclease 4 (Bacillus anthracis (strain A0248)).